Reading from the N-terminus, the 152-residue chain is 6,7-dimethyl-8-ribityllumazine synthase (152 aa).

Residues Phe-21, 55–57 (AFE), and 79–81 (AVI) contribute to the 5-amino-6-(D-ribitylamino)uracil site. A (2S)-2-hydroxy-3-oxobutyl phosphate-binding site is contributed by 84-85 (AT). His-87 acts as the Proton donor in catalysis. Phe-112 contacts 5-amino-6-(D-ribitylamino)uracil. Arg-126 lines the (2S)-2-hydroxy-3-oxobutyl phosphate pocket.

The protein belongs to the DMRL synthase family. In terms of assembly, forms an icosahedral capsid composed of 60 subunits, arranged as a dodecamer of pentamers.

The catalysed reaction is (2S)-2-hydroxy-3-oxobutyl phosphate + 5-amino-6-(D-ribitylamino)uracil = 6,7-dimethyl-8-(1-D-ribityl)lumazine + phosphate + 2 H2O + H(+). Its pathway is cofactor biosynthesis; riboflavin biosynthesis; riboflavin from 2-hydroxy-3-oxobutyl phosphate and 5-amino-6-(D-ribitylamino)uracil: step 1/2. Catalyzes the formation of 6,7-dimethyl-8-ribityllumazine by condensation of 5-amino-6-(D-ribitylamino)uracil with 3,4-dihydroxy-2-butanone 4-phosphate. This is the penultimate step in the biosynthesis of riboflavin. The protein is 6,7-dimethyl-8-ribityllumazine synthase of Exiguobacterium sibiricum (strain DSM 17290 / CCUG 55495 / CIP 109462 / JCM 13490 / 255-15).